The primary structure comprises 362 residues: Chorismate synthase (362 aa).

Residues arginine 48 and arginine 54 each contribute to the NADP(+) site. Residues 131-133 (RSS), 243-244 (NA), glycine 287, 302-306 (KPTSS), and arginine 328 each bind FMN.

It belongs to the chorismate synthase family. Homotetramer. It depends on FMNH2 as a cofactor.

The enzyme catalyses 5-O-(1-carboxyvinyl)-3-phosphoshikimate = chorismate + phosphate. It participates in metabolic intermediate biosynthesis; chorismate biosynthesis; chorismate from D-erythrose 4-phosphate and phosphoenolpyruvate: step 7/7. Catalyzes the anti-1,4-elimination of the C-3 phosphate and the C-6 proR hydrogen from 5-enolpyruvylshikimate-3-phosphate (EPSP) to yield chorismate, which is the branch point compound that serves as the starting substrate for the three terminal pathways of aromatic amino acid biosynthesis. This reaction introduces a second double bond into the aromatic ring system. The sequence is that of Chorismate synthase from Rhodopseudomonas palustris (strain TIE-1).